We begin with the raw amino-acid sequence, 125 residues long: Protein U2 (125 aa).

It belongs to the nanovirus U2 protein family.

The sequence is that of Protein U2 (DNA-U2) from Milk vetch dwarf virus (isolate N) (MDV).